The primary structure comprises 420 residues: Zinc finger and BTB domain-containing protein 42 (420 aa).

The region spanning 24–92 (CDCTVLVGDA…MYEGRLDLHN (69 aa)) is the BTB domain. Disordered regions lie at residues 127–204 (TRTL…HPPC) and 222–247 (VKAEQDSFSEQDSSSPQSADRSPPPV). A compositionally biased stretch (low complexity) spans 227 to 241 (DSFSEQDSSSPQSAD). C2H2-type zinc fingers lie at residues 292–314 (CICPLCCKLFPSTHALQLHLSAH), 332–354 (PTCPLCSKTFSCTYTLKRHERTH), 360–382 (YTCVQCGKSFQYSHNLSRHAVVH), and 388–411 (HACRWCERRFTQSGDLYRHVRKFH).

Belongs to the krueppel C2H2-type zinc-finger protein family. ZBTB18 subfamily. As to expression, highly expressed in skeletal muscle and ovary (at protein level). Low expression in brain, lung, spleen, liver and heart (at protein level). Not detected in kidney and intestines (at protein level). Also observed in testis and, at lower levels, in stomach and nervous system.

It is found in the cytoplasm. Its subcellular location is the nucleus. The protein resides in the nucleoplasm. Its function is as follows. Transcriptional repressor. Specifically binds DNA and probably acts by recruiting chromatin remodeling multiprotein complexes. This is Zinc finger and BTB domain-containing protein 42 (Zbtb42) from Mus musculus (Mouse).